The following is an 84-amino-acid chain: Dolichol phosphate-mannose biosynthesis regulatory protein (84 aa).

The next 2 helical transmembrane spans lie at L11 to L31 and Y49 to I69.

This sequence belongs to the DPM2 family. Component of the dolichol-phosphate mannose (DPM) synthase complex composed of DPM1, DPM2 and DPM3; in the complex interacts directly with DPM3. Component of the glycosylphosphatidylinositol-N-acetylglucosaminyltransferase (GPI-GnT) complex composed at least by PIGA, PIGC, PIGH, PIGP, PIGQ, PIGY and DPM2. Interacts with PIGA, PIGC and PIGQ.

The protein localises to the endoplasmic reticulum membrane. It participates in protein modification; protein glycosylation. Functionally, regulates the biosynthesis of dolichol phosphate-mannose. Regulatory subunit of the dolichol-phosphate mannose (DPM) synthase complex; essential for the ER localization and stable expression of DPM1. Part of the glycosylphosphatidylinositol-N-acetylglucosaminyltransferase (GPI-GnT) complex that catalyzes the transfer of N-acetylglucosamine from UDP-N-acetylglucosamine to phosphatidylinositol and participates in the first step of GPI biosynthesis. May act by regulating the GPI-GNT complex. In Bos taurus (Bovine), this protein is Dolichol phosphate-mannose biosynthesis regulatory protein.